Here is a 282-residue protein sequence, read N- to C-terminus: Pantothenate synthetase (282 aa).

Methionine 30–histidine 37 is an ATP binding site. The active-site Proton donor is the histidine 37. Glutamine 61 contacts (R)-pantoate. Glutamine 61 lines the beta-alanine pocket. Glycine 149–aspartate 152 contacts ATP. Residue glutamine 155 coordinates (R)-pantoate. ATP is bound by residues isoleucine 178 and methionine 186 to arginine 189.

Belongs to the pantothenate synthetase family. As to quaternary structure, homodimer.

It is found in the cytoplasm. The enzyme catalyses (R)-pantoate + beta-alanine + ATP = (R)-pantothenate + AMP + diphosphate + H(+). It participates in cofactor biosynthesis; (R)-pantothenate biosynthesis; (R)-pantothenate from (R)-pantoate and beta-alanine: step 1/1. Functionally, catalyzes the condensation of pantoate with beta-alanine in an ATP-dependent reaction via a pantoyl-adenylate intermediate. This Shewanella loihica (strain ATCC BAA-1088 / PV-4) protein is Pantothenate synthetase.